The primary structure comprises 196 residues: Transmembrane protein 126A (196 aa).

Residues 1–34 are Mitochondrial matrix-facing; the sequence is MESHKPSTSKDDLILNIISRKIKQLPESDRNLLE. Residues 35-55 traverse the membrane as a helical segment; it reads YGSAYIGLNAAFGGLIANSLF. Residues 56-57 are Mitochondrial intermembrane-facing; it reads RR. The chain crosses the membrane as a helical span at residues 58–78; that stretch reads ILNVTQARLASSLPMAVIPFL. Topologically, residues 79-106 are mitochondrial matrix; the sequence is TANLSYQSLVSLPLSTGDLNCETCTTTR. The helical transmembrane segment at 107-127 threads the bilayer; sequence GALVGLVMGGLYPILLAIPVN. Residues 128 to 159 are Mitochondrial intermembrane-facing; that stretch reads GGLAARYESSPLPQRGNIFNYWITVSKPVFRK. Residues 160–176 traverse the membrane as a helical segment; the sequence is MLFPTLLQTVFASYLGS. The Mitochondrial matrix segment spans residues 177 to 196; sequence RQYKLLIKALQLPEPDLEIH.

It belongs to the TMEM126 family. As to quaternary structure, interacts with OXA1L; promoting cotranslational quality control in mitochondria. In terms of tissue distribution, in the retina, significant levels of expression are detected in the ganglion cell layer, the optic nerve head, the outer plexiform layer, and in the outer ellipsoide length of photoreceptor inner segments.

Its subcellular location is the mitochondrion inner membrane. Protein required for the cotranslational protein quality control in the inner membrane of the mitochondria. Associates with newly synthesized polypeptides and may act as a chaperone that cooperates with OXA1L for the insertion of newly synthesized mitochondrial proteins into the inner membrane. Required for the assembly of the ND4 module of mitochondrial complex I. This is Transmembrane protein 126A from Mus musculus (Mouse).